We begin with the raw amino-acid sequence, 297 residues long: Acetyl-coenzyme A carboxylase carboxyl transferase subunit beta (297 aa).

In terms of domain architecture, CoA carboxyltransferase N-terminal spans 27–296; sequence LWHKCPSCEA…PEAAKEVAAV (270 aa). Residues C31, C34, C50, and C53 each coordinate Zn(2+). The segment at 31-53 adopts a C4-type zinc-finger fold; that stretch reads CPSCEAVLYRPELEKTLDVCPKC.

It belongs to the AccD/PCCB family. In terms of assembly, acetyl-CoA carboxylase is a heterohexamer composed of biotin carboxyl carrier protein (AccB), biotin carboxylase (AccC) and two subunits each of ACCase subunit alpha (AccA) and ACCase subunit beta (AccD). Zn(2+) serves as cofactor.

Its subcellular location is the cytoplasm. It carries out the reaction N(6)-carboxybiotinyl-L-lysyl-[protein] + acetyl-CoA = N(6)-biotinyl-L-lysyl-[protein] + malonyl-CoA. It participates in lipid metabolism; malonyl-CoA biosynthesis; malonyl-CoA from acetyl-CoA: step 1/1. In terms of biological role, component of the acetyl coenzyme A carboxylase (ACC) complex. Biotin carboxylase (BC) catalyzes the carboxylation of biotin on its carrier protein (BCCP) and then the CO(2) group is transferred by the transcarboxylase to acetyl-CoA to form malonyl-CoA. In Pseudomonas entomophila (strain L48), this protein is Acetyl-coenzyme A carboxylase carboxyl transferase subunit beta.